Consider the following 192-residue polypeptide: MGALKLVFVTGNANKLREVKKILSTDVSSEDSLKIEVDSKALDLPEVQGSTQDVAREKSRAAAKLIGGPCITEDTALCFKAMGGLPGPYIKWFLEKLGLDGLNKMLQGFSSTEATALCTFAYCEPGKEPILFEGATEGNIVPARGPTNFGWDPIFEVSGTGMTYAEMPAEQKNSLSHRSKALDKLRQHFSRR.

10-15 (TGNANK) contacts ITP. E46 contacts Mg(2+). Residues K58, 74 to 75 (DT), K91, 149 to 152 (FGWD), K172, and 177 to 178 (HR) contribute to the ITP site.

Belongs to the HAM1 NTPase family. As to quaternary structure, homodimer. It depends on Mg(2+) as a cofactor. Mn(2+) is required as a cofactor.

The protein localises to the cytoplasm. It localises to the nucleus. The catalysed reaction is ITP + H2O = IMP + diphosphate + H(+). The enzyme catalyses dITP + H2O = dIMP + diphosphate + H(+). It carries out the reaction XTP + H2O = XMP + diphosphate + H(+). In terms of biological role, pyrophosphatase that hydrolyzes non-canonical purine nucleotides such as inosine triphosphate (ITP), deoxyinosine triphosphate (dITP) or xanthosine 5'-triphosphate (XTP) to their respective monophosphate derivatives. The enzyme does not distinguish between the deoxy- and ribose forms. Probably excludes non-canonical purines from RNA and DNA precursor pools, thus preventing their incorporation into RNA and DNA and avoiding chromosomal lesions. The polypeptide is Inosine triphosphate pyrophosphatase (Puccinia graminis f. sp. tritici (strain CRL 75-36-700-3 / race SCCL) (Black stem rust fungus)).